The following is a 20-amino-acid chain: Alpha-amylase (20 aa).

The catalysed reaction is Endohydrolysis of (1-&gt;4)-alpha-D-glucosidic linkages in polysaccharides containing three or more (1-&gt;4)-alpha-linked D-glucose units.. Its activity is regulated as follows. Strongly inhibited by Hg (2+). Inhibited by Zn (2+). Activated by Fe (2+), Mg (2+) and Ba (2+). Its function is as follows. Alpha-amylase active towards amylose, starch, amylopectin and maltodextrins. Has lower activity towards glycogen, and is not active towards alpha/beta-cyclodextrin. The chain is Alpha-amylase from Bacillus sp.